The sequence spans 160 residues: Transcriptional repressor NrdR (160 aa).

Polar residues predominate over residues 1–11; sequence MRCPNCNSLDT. The disordered stretch occupies residues 1 to 20; it reads MRCPNCNSLDTQVKDSRPTE. Residues 3-34 fold into a zinc finger; that stretch reads CPNCNSLDTQVKDSRPTEDSSVIRRRRVCIAC. Residues 49–139 enclose the ATP-cone domain; sequence LTVIKRNGRR…VYRNFREAKD (91 aa).

This sequence belongs to the NrdR family. Zn(2+) is required as a cofactor.

Its function is as follows. Negatively regulates transcription of bacterial ribonucleotide reductase nrd genes and operons by binding to NrdR-boxes. This chain is Transcriptional repressor NrdR, found in Rhodopseudomonas palustris (strain HaA2).